The sequence spans 233 residues: Ras-related protein RabV (233 aa).

15 to 22 (GEKEVGKS) contacts GTP. The short motif at 37–45 (YIPTIGIDF) is the Effector region element. GTP-binding positions include 63 to 67 (DYVSH) and 122 to 125 (TKSD). The tract at residues 143–182 (QNNNNNNNNNNNNNNNNNNNNNNNNNNNNNSNNNNNNNLQ) is disordered. Over residues 144–180 (NNNNNNNNNNNNNNNNNNNNNNNNNNNNNSNNNNNNN) the composition is skewed to low complexity.

This sequence belongs to the small GTPase superfamily. Rab family.

The sequence is that of Ras-related protein RabV (rabV) from Dictyostelium discoideum (Social amoeba).